A 394-amino-acid chain; its full sequence is Lipase 3 (394 aa).

Positions 1 to 20 (MTRGALKVTILLVGLGLVLA) are cleaved as a signal peptide. A glycan (N-linked (GlcNAc...) asparagine) is linked at N131. Catalysis depends on charge relay system residues S164 and H369.

This sequence belongs to the AB hydrolase superfamily. Lipase family. In terms of tissue distribution, fat body.

This Drosophila melanogaster (Fruit fly) protein is Lipase 3 (Lip3).